We begin with the raw amino-acid sequence, 357 residues long: MHAVLALETSCDESAAAVLRRHADGRIDVLASRIASQVEEHARWGGVVPEIASRRHVEALPGLVEAVVDEAGVTLGQLDAIAATITPGLAGALMVASVTGRTLAALHQRPFLGVHHLEGHLASVMLGDVPQQAPYLVLLVSGGHTELILVAEDGGMTRLGRSHDDAAGEAFDKVARLLGLGYPGGPAIQAVAETGDATRFRLPKGRISLPGGGFHPYDFSFSGLKTAMLRTVETLRQTTDSLPLADLAASFEQVVADVLVQRSLRCAADHGVQQLVMVGGVAANRRLRQSMLEQGNQRGIAVSIAPLAFCTDNAAMIGAAALMRLGQNAACTSFESGVAARWPLDQANALYTPDPPF.

Positions 116 and 120 each coordinate Fe cation. Substrate contacts are provided by residues 139 to 143 (LVSGG), aspartate 172, glycine 185, and asparagine 284. Aspartate 312 contacts Fe cation.

Belongs to the KAE1 / TsaD family. Fe(2+) serves as cofactor.

It localises to the cytoplasm. It carries out the reaction L-threonylcarbamoyladenylate + adenosine(37) in tRNA = N(6)-L-threonylcarbamoyladenosine(37) in tRNA + AMP + H(+). Functionally, required for the formation of a threonylcarbamoyl group on adenosine at position 37 (t(6)A37) in tRNAs that read codons beginning with adenine. Is involved in the transfer of the threonylcarbamoyl moiety of threonylcarbamoyl-AMP (TC-AMP) to the N6 group of A37, together with TsaE and TsaB. TsaD likely plays a direct catalytic role in this reaction. The polypeptide is tRNA N6-adenosine threonylcarbamoyltransferase (Synechococcus sp. (strain CC9605)).